A 614-amino-acid chain; its full sequence is 4-hydroxy-3-methylbut-2-en-1-yl diphosphate synthase (flavodoxin) (614 aa).

Residues Cys-522, Cys-525, Cys-556, and Glu-563 each contribute to the [4Fe-4S] cluster site.

The protein belongs to the IspG family. The cofactor is [4Fe-4S] cluster.

It catalyses the reaction (2E)-4-hydroxy-3-methylbut-2-enyl diphosphate + oxidized [flavodoxin] + H2O + 2 H(+) = 2-C-methyl-D-erythritol 2,4-cyclic diphosphate + reduced [flavodoxin]. Its pathway is isoprenoid biosynthesis; isopentenyl diphosphate biosynthesis via DXP pathway; isopentenyl diphosphate from 1-deoxy-D-xylulose 5-phosphate: step 5/6. Functionally, converts 2C-methyl-D-erythritol 2,4-cyclodiphosphate (ME-2,4cPP) into 1-hydroxy-2-methyl-2-(E)-butenyl 4-diphosphate. This Phocaeicola vulgatus (strain ATCC 8482 / DSM 1447 / JCM 5826 / CCUG 4940 / NBRC 14291 / NCTC 11154) (Bacteroides vulgatus) protein is 4-hydroxy-3-methylbut-2-en-1-yl diphosphate synthase (flavodoxin).